Reading from the N-terminus, the 267-residue chain is 4-diphosphocytidyl-2-C-methyl-D-erythritol kinase (267 aa).

K8 is a catalytic residue. 90-100 contacts ATP; that stretch reads PIGAGLGGGSS. The active site involves D132.

The protein belongs to the GHMP kinase family. IspE subfamily.

The enzyme catalyses 4-CDP-2-C-methyl-D-erythritol + ATP = 4-CDP-2-C-methyl-D-erythritol 2-phosphate + ADP + H(+). The protein operates within isoprenoid biosynthesis; isopentenyl diphosphate biosynthesis via DXP pathway; isopentenyl diphosphate from 1-deoxy-D-xylulose 5-phosphate: step 3/6. Catalyzes the phosphorylation of the position 2 hydroxy group of 4-diphosphocytidyl-2C-methyl-D-erythritol. This chain is 4-diphosphocytidyl-2-C-methyl-D-erythritol kinase, found in Azobacteroides pseudotrichonymphae genomovar. CFP2.